A 205-amino-acid polypeptide reads, in one-letter code: Holliday junction branch migration complex subunit RuvA (205 aa).

The tract at residues 1 to 64 (MIGRLRGIIL…EDAQLLYGFN (64 aa)) is domain I. The domain II stretch occupies residues 65–143 (DKQERALFRE…GLNGDLFNNT (79 aa)). The segment at 144 to 156 (GDIQLPASNSSQI) is flexible linker. The segment at 157–205 (SDADIEAEAASALVALGYKPQEASRLVSKIAKPGADCETLIRDALRAAL) is domain III.

The protein belongs to the RuvA family. In terms of assembly, homotetramer. Forms an RuvA(8)-RuvB(12)-Holliday junction (HJ) complex. HJ DNA is sandwiched between 2 RuvA tetramers; dsDNA enters through RuvA and exits via RuvB. An RuvB hexamer assembles on each DNA strand where it exits the tetramer. Each RuvB hexamer is contacted by two RuvA subunits (via domain III) on 2 adjacent RuvB subunits; this complex drives branch migration. In the full resolvosome a probable DNA-RuvA(4)-RuvB(12)-RuvC(2) complex forms which resolves the HJ.

The protein localises to the cytoplasm. The RuvA-RuvB-RuvC complex processes Holliday junction (HJ) DNA during genetic recombination and DNA repair, while the RuvA-RuvB complex plays an important role in the rescue of blocked DNA replication forks via replication fork reversal (RFR). RuvA specifically binds to HJ cruciform DNA, conferring on it an open structure. The RuvB hexamer acts as an ATP-dependent pump, pulling dsDNA into and through the RuvAB complex. HJ branch migration allows RuvC to scan DNA until it finds its consensus sequence, where it cleaves and resolves the cruciform DNA. The protein is Holliday junction branch migration complex subunit RuvA of Yersinia enterocolitica serotype O:8 / biotype 1B (strain NCTC 13174 / 8081).